The primary structure comprises 209 residues: Type III pantothenate kinase (209 aa).

5-12 (DIGNSNAN) serves as a coordination point for ATP. Substrate-binding positions include Tyr68 and 72–75 (GIDR). Catalysis depends on Asp74, which acts as the Proton acceptor. Position 89 (Asp89) interacts with K(+). Ser92 is a binding site for ATP. Thr144 contributes to the substrate binding site.

It belongs to the type III pantothenate kinase family. Homodimer. NH4(+) serves as cofactor. It depends on K(+) as a cofactor.

The protein resides in the cytoplasm. It catalyses the reaction (R)-pantothenate + ATP = (R)-4'-phosphopantothenate + ADP + H(+). Its pathway is cofactor biosynthesis; coenzyme A biosynthesis; CoA from (R)-pantothenate: step 1/5. Functionally, catalyzes the phosphorylation of pantothenate (Pan), the first step in CoA biosynthesis. The chain is Type III pantothenate kinase from Campylobacter jejuni (strain RM1221).